The sequence spans 181 residues: Inner membrane-spanning protein YciB (181 aa).

5 consecutive transmembrane segments (helical) span residues 22-42 (IYTA…VTYA), 50-70 (MQLI…FLHD), 80-100 (IVYC…KPVI), 122-142 (WVLF…EMPL), and 148-168 (FKVF…GMYV).

The protein belongs to the YciB family.

It localises to the cell inner membrane. In terms of biological role, plays a role in cell envelope biogenesis, maintenance of cell envelope integrity and membrane homeostasis. The protein is Inner membrane-spanning protein YciB of Aliivibrio fischeri (strain ATCC 700601 / ES114) (Vibrio fischeri).